We begin with the raw amino-acid sequence, 433 residues long: Succinate--CoA ligase [ADP-forming] subunit beta, mitochondrial (433 aa).

A mitochondrion-targeting transit peptide spans 1–23 (MLTRSVLRKAPRAFSPFLQKRNL). The region spanning 31–273 (HDILRKFGVD…ISQEDPDEAR (243 aa)) is the ATP-grasp domain. Residues lysine 68, 75–77 (GRG), and glutamate 136 each bind ATP. Mg(2+)-binding residues include asparagine 228 and aspartate 242. Substrate-binding positions include asparagine 293 and 350–352 (GIV).

It belongs to the succinate/malate CoA ligase beta subunit family. In terms of assembly, heterodimer of an alpha and a beta subunit. Mg(2+) serves as cofactor.

It localises to the mitochondrion. It carries out the reaction succinate + ATP + CoA = succinyl-CoA + ADP + phosphate. It functions in the pathway carbohydrate metabolism; tricarboxylic acid cycle; succinate from succinyl-CoA (ligase route): step 1/1. Functionally, succinyl-CoA synthetase functions in the citric acid cycle (TCA), coupling the hydrolysis of succinyl-CoA to the synthesis of ATP and thus represents the only step of substrate-level phosphorylation in the TCA. The beta subunit provides nucleotide specificity of the enzyme and binds the substrate succinate, while the binding sites for coenzyme A and phosphate are found in the alpha subunit. The polypeptide is Succinate--CoA ligase [ADP-forming] subunit beta, mitochondrial (Schizosaccharomyces pombe (strain 972 / ATCC 24843) (Fission yeast)).